A 442-amino-acid polypeptide reads, in one-letter code: MVSKGKTAVVIGAQWGDEGKGKIVDVLSENFRVVARYAGGHNAGHTVLIGGKKFVLQLIPCGVLRPGCRGVIGNGVVLDPIAFLNEVQRLRDLGVAVDGNLFVSSRAHVILPYHRMVELASENAPGRVKIGTTSRGIGPSYEDKMGRRGLRVADLLDSTLLKKHIENACKEKNTIVHALFNAEPIDPDKMYNEYAKAAEKVAPFVTDTAVLLNNAINSGESVMFEGAQGTMLDIDHGTYPFVTSSSATSGGAVIGTGVPPTSISTVIGVTKAYCTRVGEGPFPSELHDAMGDAIRKKGNEFGAVTGRPRRTGWLDLPLLRYSNMINGTEWLVVTKLDVLDELDEIPVATSYKIDGKESEEIPAQGCGFDKIEPIYTKLPGWKTDTTKISKYEDLPAKTKEYLKFVEQQSGAKVGILSTGPDRDQSIYTDAFVNALGLKHLGK.

GTP is bound by residues 16–22 (GDEGKGK) and 44–46 (GHT). Aspartate 17 acts as the Proton acceptor in catalysis. Mg(2+) contacts are provided by aspartate 17 and glycine 44. Residues 17 to 20 (DEGK), 42 to 45 (NAGH), threonine 133, arginine 147, glutamine 228, threonine 243, and arginine 307 each bind IMP. The Proton donor role is filled by histidine 45. 303 to 309 (AVTGRPR) lines the substrate pocket. Residues arginine 309, 335–337 (KLD), and 417–419 (STG) each bind GTP.

Belongs to the adenylosuccinate synthetase family. As to quaternary structure, homodimer. The cofactor is Mg(2+).

It is found in the cytoplasm. It catalyses the reaction IMP + L-aspartate + GTP = N(6)-(1,2-dicarboxyethyl)-AMP + GDP + phosphate + 2 H(+). It functions in the pathway purine metabolism; AMP biosynthesis via de novo pathway; AMP from IMP: step 1/2. Plays an important role in the de novo pathway of purine nucleotide biosynthesis. Catalyzes the first committed step in the biosynthesis of AMP from IMP. This chain is Adenylosuccinate synthetase, found in Koribacter versatilis (strain Ellin345).